Reading from the N-terminus, the 134-residue chain is ATP synthase epsilon chain (134 aa).

The protein belongs to the ATPase epsilon chain family. F-type ATPases have 2 components, CF(1) - the catalytic core - and CF(0) - the membrane proton channel. CF(1) has five subunits: alpha(3), beta(3), gamma(1), delta(1), epsilon(1). CF(0) has three main subunits: a, b and c.

Its subcellular location is the cell inner membrane. In terms of biological role, produces ATP from ADP in the presence of a proton gradient across the membrane. In Nitratidesulfovibrio vulgaris (strain ATCC 29579 / DSM 644 / CCUG 34227 / NCIMB 8303 / VKM B-1760 / Hildenborough) (Desulfovibrio vulgaris), this protein is ATP synthase epsilon chain.